The primary structure comprises 221 residues: Thymidylate kinase (221 aa).

12–19 provides a ligand contact to ATP; that stretch reads GIDGAGKS.

This sequence belongs to the thymidylate kinase family.

It catalyses the reaction dTMP + ATP = dTDP + ADP. Functionally, phosphorylation of dTMP to form dTDP in both de novo and salvage pathways of dTTP synthesis. This chain is Thymidylate kinase, found in Paracidovorax citrulli (strain AAC00-1) (Acidovorax citrulli).